The primary structure comprises 205 residues: Holliday junction branch migration complex subunit RuvA (205 aa).

A domain I region spans residues 1-64 (MIGKLKGVID…EDQIKLFGFR (64 aa)). The tract at residues 65–143 (TDHEREWFRL…SFANVDPTVV (79 aa)) is domain II. A flexible linker region spans residues 144 to 154 (HLAGDLDDQRA). Residues 154 to 205 (APRPVRDAISALVNLGYGQPQATAAIAAASRGAGENAETAQLIRLGLKELSK) are domain III.

It belongs to the RuvA family. As to quaternary structure, homotetramer. Forms an RuvA(8)-RuvB(12)-Holliday junction (HJ) complex. HJ DNA is sandwiched between 2 RuvA tetramers; dsDNA enters through RuvA and exits via RuvB. An RuvB hexamer assembles on each DNA strand where it exits the tetramer. Each RuvB hexamer is contacted by two RuvA subunits (via domain III) on 2 adjacent RuvB subunits; this complex drives branch migration. In the full resolvosome a probable DNA-RuvA(4)-RuvB(12)-RuvC(2) complex forms which resolves the HJ.

The protein resides in the cytoplasm. Its function is as follows. The RuvA-RuvB-RuvC complex processes Holliday junction (HJ) DNA during genetic recombination and DNA repair, while the RuvA-RuvB complex plays an important role in the rescue of blocked DNA replication forks via replication fork reversal (RFR). RuvA specifically binds to HJ cruciform DNA, conferring on it an open structure. The RuvB hexamer acts as an ATP-dependent pump, pulling dsDNA into and through the RuvAB complex. HJ branch migration allows RuvC to scan DNA until it finds its consensus sequence, where it cleaves and resolves the cruciform DNA. This chain is Holliday junction branch migration complex subunit RuvA, found in Nitrobacter winogradskyi (strain ATCC 25391 / DSM 10237 / CIP 104748 / NCIMB 11846 / Nb-255).